A 130-amino-acid polypeptide reads, in one-letter code: Large ribosomal subunit protein uL22 (130 aa).

The protein belongs to the universal ribosomal protein uL22 family. Part of the 50S ribosomal subunit.

This protein binds specifically to 23S rRNA; its binding is stimulated by other ribosomal proteins, e.g. L4, L17, and L20. It is important during the early stages of 50S assembly. It makes multiple contacts with different domains of the 23S rRNA in the assembled 50S subunit and ribosome. In terms of biological role, the globular domain of the protein is located near the polypeptide exit tunnel on the outside of the subunit, while an extended beta-hairpin is found that lines the wall of the exit tunnel in the center of the 70S ribosome. This Clavibacter sepedonicus (Clavibacter michiganensis subsp. sepedonicus) protein is Large ribosomal subunit protein uL22.